The following is a 261-amino-acid chain: Thiamine thiazole synthase (261 aa).

NAD(+) is bound by residues Ser33, 52–53 (ER), Gly60, Val124, and 152–154 (HVD). The Fe cation site is built by Asp154 and His169. Residue Met219 coordinates NAD(+). Arg229 is a binding site for glycine.

Belongs to the THI4 family. In terms of assembly, homooctamer; tetramer of dimers. Fe(2+) serves as cofactor.

It carries out the reaction hydrogen sulfide + glycine + NAD(+) = ADP-5-ethyl-4-methylthiazole-2-carboxylate + nicotinamide + 3 H2O + H(+). It functions in the pathway cofactor biosynthesis; thiamine diphosphate biosynthesis. Its function is as follows. Involved in the biosynthesis of the thiazole moiety of thiamine. Catalyzes the conversion of NAD and glycine to adenosine diphosphate 5-(2-hydroxyethyl)-4-methylthiazole-2-carboxylate (ADT), an adenylated thiazole intermediate, using free sulfide as a source of sulfur. The sequence is that of Thiamine thiazole synthase from Pyrobaculum arsenaticum (strain DSM 13514 / JCM 11321 / PZ6).